Reading from the N-terminus, the 404-residue chain is 5-azacytidine-induced protein 2 (404 aa).

Residues 1–198 (MDTLVEDDIC…TELQKARQTG (198 aa)) form a homodimerization region. Residues 40–198 (ALVTAYEDIK…TELQKARQTG (159 aa)) adopt a coiled-coil conformation. The interval 229–269 (SDHMQHAYWELRREMANLHLVTRVQAELLRQLKTAAAGKAC) is interaction with TBK1 and IKBKE. Residue Ser330 is modified to Phosphoserine. 2 disordered regions span residues 332 to 351 (TDNE…HNSY) and 356 to 390 (LEDN…LPPL). A Phosphoserine modification is found at Ser365.

Homodimer. Interacts with IKBKE, TBK1 and TICAM1. Interacts with TAX1BP1. Interacts with CALCOCO2. In terms of processing, ubiquitinated via 'Lys-48'-linked polyubiquitination by TRIM38, leading to its degradation.

It is found in the cytoplasm. In terms of biological role, adapter protein which binds TBK1 and IKBKE playing a role in antiviral innate immunity. Activates serine/threonine-protein kinase TBK1 and facilitates its oligomerization. Enhances the phosphorylation of NF-kappa-B p65 subunit RELA by TBK1. Promotes TBK1-induced as well as TNF-alpha or PMA-induced activation of NF-kappa-B. Participates in IFNB promoter activation via TICAM1. This is 5-azacytidine-induced protein 2 (Azi2) from Rattus norvegicus (Rat).